Consider the following 133-residue polypeptide: Small ribosomal subunit protein uS11 (133 aa).

It belongs to the universal ribosomal protein uS11 family. As to quaternary structure, part of the 30S ribosomal subunit.

Located on the platform of the 30S subunit. In Aeropyrum pernix (strain ATCC 700893 / DSM 11879 / JCM 9820 / NBRC 100138 / K1), this protein is Small ribosomal subunit protein uS11.